The chain runs to 330 residues: ADP-L-glycero-D-manno-heptose-6-epimerase (330 aa).

NADP(+) contacts are provided by residues 11-12 (FI), 32-33 (DN), Lys-39, Lys-54, 75-79 (EGACS), and Asn-92. Tyr-139 acts as the Proton acceptor in catalysis. Lys-143 lines the NADP(+) pocket. Asn-168 lines the substrate pocket. NADP(+)-binding residues include Val-169 and Lys-177. Lys-177 (proton acceptor) is an active-site residue. Substrate is bound by residues Arg-179, His-186, 200–203 (FGEY), Arg-213, and Tyr-292.

The protein belongs to the NAD(P)-dependent epimerase/dehydratase family. HldD subfamily. As to quaternary structure, homopentamer. It depends on NADP(+) as a cofactor.

It catalyses the reaction ADP-D-glycero-beta-D-manno-heptose = ADP-L-glycero-beta-D-manno-heptose. It participates in nucleotide-sugar biosynthesis; ADP-L-glycero-beta-D-manno-heptose biosynthesis; ADP-L-glycero-beta-D-manno-heptose from D-glycero-beta-D-manno-heptose 7-phosphate: step 4/4. Functionally, catalyzes the interconversion between ADP-D-glycero-beta-D-manno-heptose and ADP-L-glycero-beta-D-manno-heptose via an epimerization at carbon 6 of the heptose. In Paraburkholderia xenovorans (strain LB400), this protein is ADP-L-glycero-D-manno-heptose-6-epimerase.